The primary structure comprises 345 residues: MCSVLAIALVVALLGDMHPGVKSSTTSAVTSPSNTTVTSTTSISTSNNVSSAVTTTVQTSTSSASTSVIATTQKEGHLYTVNCEASYSYDQVSLNATCKVILLNNTKNPDILSVTCYARTDCKGPFTQVGYLSAFPSNDKGKLHLSYNATAQELLISGLRPQETTEYTCSFFSWGRHHNATWDLFTYPIYAVYGTRLNATTMRVRVLLQEHEHCLLNGSSLYHPNSTVHLHQGDQLIPPWNISNVTYNGQRLREFVFYLNGTYTVVRLHVQIAGRSFTTTYVFIKSDPLFEDRLLAYGVLAFLVFMVIILLYVTYMLARRRDWSYKRLEEPVEEKKHPVPYFKQW.

The signal sequence occupies residues 1–23 (MCSVLAIALVVALLGDMHPGVKS). Positions 23 to 43 (SSTTSAVTSPSNTTVTSTTSI) are disordered. Topologically, residues 24-293 (STTSAVTSPS…IKSDPLFEDR (270 aa)) are virion surface. 12 N-linked (GlcNAc...) asparagine; by host glycosylation sites follow: Asn34, Asn48, Asn95, Asn104, Asn148, Asn179, Asn198, Asn217, Asn225, Asn241, Asn244, and Asn260. Residues 91-190 (QVSLNATCKV…TWDLFTYPIY (100 aa)) form the Ig-like V-type domain. Residues 294–314 (LLAYGVLAFLVFMVIILLYVT) form a helical membrane-spanning segment. Over 315–345 (YMLARRRDWSYKRLEEPVEEKKHPVPYFKQW) the chain is Intravirion.

It localises to the virion membrane. Serves as a receptor for the Fc part of human IgG. May thus be involved in interfering with host Ig-mediated immune responses. This Homo sapiens (Human) protein is Viral Fc-gamma receptor-like protein UL119 (UL119/UL118).